Here is a 346-residue protein sequence, read N- to C-terminus: WD repeat-containing protein LWD1 (346 aa).

Met1 bears the N-acetylmethionine mark. WD repeat units follow at residues 79-121 (EHPY…SRVE), 133-173 (EFCG…VDTQ), 176-214 (AHDK…HSTI), and 265-305 (RHQA…QHVE).

It localises to the nucleus. In terms of biological role, clock protein essential for the proper expression phase and period length of both the oscillator and output genes known to participate in photoperiod sensing. Required for the expression of APRR9, APRR7, and APRR5. Regulated by APRR9 and APRR7 at the transcriptional level, indicating the existence of a positive feedback loop within the circadian clock. May function to delay the expression of the morning genes until dawn approaches. This is WD repeat-containing protein LWD1 (LWD1) from Arabidopsis thaliana (Mouse-ear cress).